Reading from the N-terminus, the 255-residue chain is 14-3-3-like protein GF14 psi (255 aa).

Ser-66 is subject to Phosphoserine. Thr-162 carries the post-translational modification Phosphothreonine. Phosphoserine is present on Ser-189. Phosphothreonine is present on residues Thr-210 and Thr-238.

It belongs to the 14-3-3 family. As to quaternary structure, component of a DNA binding complex that binds to the G box. Interacts with IDH3, AGT3, GLN1-1, GLN1-2, GLN1-4, SAM1, SAM2, MDH1, METK3 and MDH2. Binds to 1-aminocyclopropane-1-carboxylate synthases (ACS) such as ACS2, ACS5, ACS6, ACS8, and ACS11. Interacts with FD. Interacts with DREB1A and DREB1B in the nucleus. Interacts with CINV1.

It is found in the cytoplasm. The protein resides in the nucleus. Its function is as follows. Is associated with a DNA binding complex that binds to the G box, a well-characterized cis-acting DNA regulatory element found in plant genes. Involved in the regulation of nutrient metabolism. Reciprocal negative transcription regulation of miR396. Negative regulator of constitutive freezing tolerance and cold acclimation by controlling cold-induced gene expression partially through an ethylene (ET)-dependent pathway; prevents ethylene (ET) biosynthesis, probably by binding 1-aminocyclopropane-1-carboxylate synthases (ACS) to reduce their stability, thus contributing to establish adequate ET levels under both standard and low-temperature conditions. The chain is 14-3-3-like protein GF14 psi from Arabidopsis thaliana (Mouse-ear cress).